Here is a 601-residue protein sequence, read N- to C-terminus: Elongation factor 4 (601 aa).

One can recognise a tr-type G domain in the interval 7-189 (SLIRNFSIIA…ALVTRLPPPV (183 aa)). Residues 19–24 (DHGKST) and 136–139 (NKVD) each bind GTP.

Belongs to the TRAFAC class translation factor GTPase superfamily. Classic translation factor GTPase family. LepA subfamily.

It is found in the cell inner membrane. The catalysed reaction is GTP + H2O = GDP + phosphate + H(+). Required for accurate and efficient protein synthesis under certain stress conditions. May act as a fidelity factor of the translation reaction, by catalyzing a one-codon backward translocation of tRNAs on improperly translocated ribosomes. Back-translocation proceeds from a post-translocation (POST) complex to a pre-translocation (PRE) complex, thus giving elongation factor G a second chance to translocate the tRNAs correctly. Binds to ribosomes in a GTP-dependent manner. The chain is Elongation factor 4 from Gluconacetobacter diazotrophicus (strain ATCC 49037 / DSM 5601 / CCUG 37298 / CIP 103539 / LMG 7603 / PAl5).